A 318-amino-acid polypeptide reads, in one-letter code: Olfactory receptor 13C5 (318 aa).

Residues 1 to 25 are Extracellular-facing; it reads MEWENHTILVEFFLKGLSGHPRLEL. N5 is a glycosylation site (N-linked (GlcNAc...) asparagine). Residues 26 to 46 traverse the membrane as a helical segment; it reads LFFVLIFIMYVVILLGNGTLI. The Cytoplasmic segment spans residues 47–54; sequence LISILDPH. A helical membrane pass occupies residues 55 to 75; sequence LHTPMYFFLGNLSFLDICYTT. At 76–99 the chain is on the extracellular side; it reads TSIPSTLVSFLSERKTISLSGCAV. A disulfide bridge connects residues C97 and C189. Residues 100 to 120 form a helical membrane-spanning segment; it reads QMFLSLAMGTTECVLLGVMAF. Residues 121 to 139 are Cytoplasmic-facing; that stretch reads DRYVAICNPLRYPIIMSKD. Residues 140 to 160 form a helical membrane-spanning segment; the sequence is AYVPMAAGSWIIGAVNSAVQT. At 161 to 197 the chain is on the extracellular side; that stretch reads VFVVQLPFCRNNIINHFTCEILAVMKLACADISGNEF. Residues 198-217 form a helical membrane-spanning segment; sequence ILLVTTTLFLLTPLLLIIVS. At 218–237 the chain is on the cytoplasmic side; that stretch reads YTLIILSIFKISSSEGRSKP. Residues 238–258 traverse the membrane as a helical segment; the sequence is SSTCSARLTVVITFCGTIFLM. Residues 259–277 are Extracellular-facing; that stretch reads YMKPKSQETLNSDDLDATD. Residues 278–298 form a helical membrane-spanning segment; that stretch reads KLIFIFYRVMTPMMNPLIYSL. At 299–318 the chain is on the cytoplasmic side; it reads RNKDVKEAVKHLLRRKNFNK.

This sequence belongs to the G-protein coupled receptor 1 family.

Its subcellular location is the cell membrane. Its function is as follows. Odorant receptor. This is Olfactory receptor 13C5 (OR13C5) from Homo sapiens (Human).